Here is a 750-residue protein sequence, read N- to C-terminus: Photosystem I P700 chlorophyll a apoprotein A1 (750 aa).

8 helical membrane passes run 72 to 95 (VFSA…FHGA), 158 to 181 (LYST…FHYH), 197 to 221 (LNHH…HVSL), 293 to 311 (TAHH…GHMY), 348 to 371 (WHAQ…HHMY), 387 to 413 (LSIF…IFMV), 435 to 457 (AIIS…LYIH), and 532 to 550 (FLVH…LILL). Residues C574 and C583 each contribute to the [4Fe-4S] cluster site. The next 2 helical transmembrane spans lie at 590 to 611 (HVFL…HFSW) and 664 to 686 (LSAY…MFLF). H675 lines the chlorophyll a' pocket. Chlorophyll a-binding residues include M683 and Y691. W692 contacts phylloquinone. A helical membrane pass occupies residues 724–744 (AVGVAHYLLGGIATTWAFFLA).

This sequence belongs to the PsaA/PsaB family. The PsaA/B heterodimer binds the P700 chlorophyll special pair and subsequent electron acceptors. PSI consists of a core antenna complex that captures photons, and an electron transfer chain that converts photonic excitation into a charge separation. The eukaryotic PSI reaction center is composed of at least 11 subunits. P700 is a chlorophyll a/chlorophyll a' dimer, A0 is one or more chlorophyll a, A1 is one or both phylloquinones and FX is a shared 4Fe-4S iron-sulfur center. serves as cofactor.

The protein localises to the plastid. The protein resides in the chloroplast thylakoid membrane. It carries out the reaction reduced [plastocyanin] + hnu + oxidized [2Fe-2S]-[ferredoxin] = oxidized [plastocyanin] + reduced [2Fe-2S]-[ferredoxin]. Its function is as follows. PsaA and PsaB bind P700, the primary electron donor of photosystem I (PSI), as well as the electron acceptors A0, A1 and FX. PSI is a plastocyanin-ferredoxin oxidoreductase, converting photonic excitation into a charge separation, which transfers an electron from the donor P700 chlorophyll pair to the spectroscopically characterized acceptors A0, A1, FX, FA and FB in turn. Oxidized P700 is reduced on the lumenal side of the thylakoid membrane by plastocyanin. This is Photosystem I P700 chlorophyll a apoprotein A1 from Chlorokybus atmophyticus (Soil alga).